Reading from the N-terminus, the 450-residue chain is Thiamine biosynthesis regulatory protein (450 aa).

A compositionally biased stretch (basic residues) spans 1 to 12 (MVNSKRQQRSKK). The tract at residues 1-23 (MVNSKRQQRSKKVASSSKVPPTK) is disordered. Residues 13–23 (VASSSKVPPTK) show a composition bias toward low complexity. Positions 30-57 (CWACRFKKRRCDENRPICSLCAKHGDNC) form a DNA-binding region, zn(2)-C6 fungal-type. The disordered stretch occupies residues 210 to 234 (TDQLPSPGHSMSSAEETTTAALSSP).

It localises to the nucleus. In terms of biological role, positive regulator of thiamine biosynthesis. The sequence is that of Thiamine biosynthesis regulatory protein (THI2) from Saccharomyces cerevisiae (strain ATCC 204508 / S288c) (Baker's yeast).